The sequence spans 327 residues: Glycerol-3-phosphate dehydrogenase [NAD(P)+] (327 aa).

NADPH-binding residues include Ser10, Phe11, Arg31, and Lys108. The sn-glycerol 3-phosphate site is built by Lys108, Gly136, and Ser138. Ala140 serves as a coordination point for NADPH. Sn-glycerol 3-phosphate-binding residues include Lys191, Asp246, Ser256, Arg257, and Asn258. Residue Lys191 is the Proton acceptor of the active site. An NADPH-binding site is contributed by Arg257. NADPH contacts are provided by Leu281 and Glu283.

It belongs to the NAD-dependent glycerol-3-phosphate dehydrogenase family.

It localises to the cytoplasm. It carries out the reaction sn-glycerol 3-phosphate + NAD(+) = dihydroxyacetone phosphate + NADH + H(+). The enzyme catalyses sn-glycerol 3-phosphate + NADP(+) = dihydroxyacetone phosphate + NADPH + H(+). It functions in the pathway membrane lipid metabolism; glycerophospholipid metabolism. Catalyzes the reduction of the glycolytic intermediate dihydroxyacetone phosphate (DHAP) to sn-glycerol 3-phosphate (G3P), the key precursor for phospholipid synthesis. The polypeptide is Glycerol-3-phosphate dehydrogenase [NAD(P)+] (Ehrlichia ruminantium (strain Welgevonden)).